The chain runs to 515 residues: Organic cation/carnitine transporter 5 (515 aa).

Over 1–43 (MADSLAPLLPTHIEEDEDTSSPLTFDKILEKSLSDFGFSQFLQ) the chain is Cytoplasmic. The helical transmembrane segment at 44 to 64 (IVLVGLALTFDSQQIFITVFT) threads the bilayer. The Extracellular portion of the chain corresponds to 65-124 (DAYPTWHCLDHTICNPATTDICKIPRSAWDWDGGFKGKSVISEFDLECSSSFLRSLPSST). A helical transmembrane segment spans residues 125-145 (FYVGSIVGGVVLAMIPDGSLG). Residues 146–149 (RKQL) are Cytoplasmic-facing. A helical membrane pass occupies residues 150–172 (LFFSSFAMSLTGISIFLSSNIWI). Over 173–177 (YSFLK) the chain is Extracellular. The helical transmembrane segment at 178–195 (FVIGFARSQTGTYALVLI) threads the bilayer. 195-202 (ISERISTK) provides a ligand contact to ATP. Residues 196 to 208 (SERISTKWRPRAT) lie on the Cytoplasmic side of the membrane. Residues 209-229 (MVPFTLFVLGFMSLSGIAYLV) traverse the membrane as a helical segment. Residues 230–235 (RHASWK) are Extracellular-facing. The chain crosses the membrane as a helical span at residues 236–256 (VLYLCTSIPAGIHSIFIYFFA). Residues 257-320 (LESPRWLHLE…LFIIKWAFRR (64 aa)) are Cytoplasmic-facing. A helical transmembrane segment spans residues 321–341 (VTLVMIIMFGLGMSYYGVPLA). The Extracellular segment spans residues 342–350 (VRDIKVNIY). The chain crosses the membrane as a helical span at residues 351–371 (MSEALNAMVELPTFVVTPILL). At 372–379 (EQFSRRSS) the chain is on the cytoplasmic side. The helical transmembrane segment at 380–400 (VLVNCLIGGASGVLCFVMSLY) threads the bilayer. Residues 401–411 (GRTKIAFALEL) are Extracellular-facing. The chain crosses the membrane as a helical span at residues 412 to 432 (GSFFCARIGFNLMAIYLVELF). The Cytoplasmic segment spans residues 433–441 (PTCVRNSAT). The chain crosses the membrane as a helical span at residues 442-462 (MMLRQALVVGGACCPLIASLG). The Extracellular portion of the chain corresponds to 463-467 (RNVPS). The helical transmembrane segment at 468 to 488 (LSFAVFGFAMSGLGLFALLLP) threads the bilayer. Residues 489–515 (ETKGLSLCDTMEEQEQRDQALKTSHSC) are Cytoplasmic-facing.

Belongs to the major facilitator (TC 2.A.1) superfamily. Organic cation transporter (TC 2.A.1.19) family. Mostly expressed in leaves and siliques, and, to a lower extent, in roots, stems and flowers.

It localises to the vacuole membrane. Its function is as follows. High affinity carnitine transporter involved in the active cellular uptake of carnitine. Also transports organic cations. This is Organic cation/carnitine transporter 5 (OCT5) from Arabidopsis thaliana (Mouse-ear cress).